A 134-amino-acid polypeptide reads, in one-letter code: Loki profilin-2 (134 aa).

The interval leucine 55 to isoleucine 62 is loki loop.

The protein belongs to the Asgard profilin family.

Its subcellular location is the cytoplasm. It is found in the cytoskeleton. Its activity is regulated as follows. Inhibition of rabbit actin polymerization is reduced by phosphatidylinositol-(4,5)-P2(1,2-dipalmitoyl), a soluble form of the phospholipid phosphatidylinositol, suggesting an unknown lipid might regulate actin-profilin interaction in vivo. Functionally, binds to actin and affects the structure of the cytoskeleton. At high concentrations inhibits spontaneous rabbit actin nucleation. This strongly suggests this archaea has a profilin-regulated actin system, and actin-type genes can be identified in this organism. The polypeptide is Loki profilin-2 (Lokiarchaeum sp. (strain GC14_75)).